The primary structure comprises 788 residues: Auxin response factor 4 (788 aa).

Over residues 1–19 the composition is skewed to acidic residues; that stretch reads MEFDLNTEIAEVEEEENDD. The tract at residues 1-53 is disordered; it reads MEFDLNTEIAEVEEEENDDVGVGVGGGTRIDKGRLGISPSSSSSCSSGSSSSS. A compositionally biased stretch (low complexity) spans 38-53; the sequence is SPSSSSSCSSGSSSSS. Residues 177 to 279 constitute a DNA-binding region (TF-B3); it reads FCKTLTASDT…ELRLGIRRAA (103 aa). The disordered stretch occupies residues 413–433; the sequence is LSIQSSPRPKRPWAGLLDTTP. The region spanning 665 to 747 is the PB1 domain; sequence RICTKVHKQG…VVWKIHLYTK (83 aa).

This sequence belongs to the ARF family. Homodimers and heterodimers. As to expression, expressed in the whole plant.

The protein localises to the nucleus. Its function is as follows. Auxin response factors (ARFs) are transcriptional factors that bind specifically to the DNA sequence 5'-TGTCTC-3' found in the auxin-responsive promoter elements (AuxREs). Could act as transcriptional activator or repressor. Formation of heterodimers with Aux/IAA proteins may alter their ability to modulate early auxin response genes expression. The chain is Auxin response factor 4 (ARF4) from Arabidopsis thaliana (Mouse-ear cress).